The sequence spans 367 residues: o-succinylbenzoate synthase (367 aa).

Lysine 164 serves as the catalytic Proton donor. Mg(2+)-binding residues include aspartate 189, glutamate 214, and aspartate 239. The Proton acceptor role is filled by lysine 263.

It belongs to the mandelate racemase/muconate lactonizing enzyme family. MenC type 2 subfamily. Homodimer. Requires a divalent metal cation as cofactor.

The catalysed reaction is (1R,6R)-6-hydroxy-2-succinyl-cyclohexa-2,4-diene-1-carboxylate = 2-succinylbenzoate + H2O. It participates in quinol/quinone metabolism; 1,4-dihydroxy-2-naphthoate biosynthesis; 1,4-dihydroxy-2-naphthoate from chorismate: step 4/7. Its pathway is quinol/quinone metabolism; menaquinone biosynthesis. Converts 2-succinyl-6-hydroxy-2,4-cyclohexadiene-1-carboxylate (SHCHC) to 2-succinylbenzoate (OSB). Also acts as a N-succinylamino acid racemase (NSAR) that catalyzes the racemization of N-succinyl-L-phenylglycine. Since the gene is encoded in a menaquinone synthesis operon, OSB synthase is probably the physiological activity. A pathway that requires NSAR activity has not been identified in this species, so whether NSAR is also a biological activity is unknown. The chain is o-succinylbenzoate synthase from Enterococcus faecalis (strain ATCC 700802 / V583).